The primary structure comprises 526 residues: Collagen alpha-2(I) chain (526 aa).

A disordered region spans residues 1–291; the sequence is GFPGEKGPSG…PRSPPSLRPK (291 aa). Low complexity-rich tracts occupy residues 9 to 36, 44 to 81, and 110 to 131; these read SGEA…LGLP, LPGV…NGAP, and YPGN…SVGP. Residues 165 to 176 are compositionally biased toward basic and acidic residues; the sequence is RGDKGEPGDKGP. Over residues 249-261 the composition is skewed to pro residues; the sequence is AGPPGPPGPPGPP. The propeptide at 263-526 is C-terminal propeptide; sequence ASGGGYDFGY…YVDVGPVCFK (264 aa). Residues 293–526 enclose the Fibrillar collagen NC1 domain; it reads YEVDATLKSL…YVDVGPVCFK (234 aa). 3 disulfide bridges follow: Cys-323-Cys-355, Cys-363-Cys-524, and Cys-432-Cys-477. Positions 341, 343, 344, 346, and 349 each coordinate Ca(2+).

This sequence belongs to the fibrillar collagen family. In terms of assembly, trimers of one alpha 2(I) and two alpha 1(I) chains. Interacts (via C-terminus) with TMEM131 (via PapD-L domain); the interaction is direct and is involved in assembly and TRAPPIII ER-to-Golgi transport complex-dependent secretion of collagen. In terms of processing, prolines at the third position of the tripeptide repeating unit (G-X-Y) are hydroxylated in some or all of the chains. In terms of tissue distribution, forms the fibrils of tendon, ligaments and bones. In bones the fibrils are mineralized with calcium hydroxyapatite.

The protein resides in the secreted. It is found in the extracellular space. It localises to the extracellular matrix. Its function is as follows. Type I collagen is a member of group I collagen (fibrillar forming collagen). The sequence is that of Collagen alpha-2(I) chain (COL1A2) from Oryctolagus cuniculus (Rabbit).